The sequence spans 140 residues: Nucleoside diphosphate kinase (140 aa).

ATP is bound by residues Lys11, Phe59, Arg87, Thr93, Arg104, and Asn114. His117 acts as the Pros-phosphohistidine intermediate in catalysis.

The protein belongs to the NDK family. As to quaternary structure, homotetramer. The cofactor is Mg(2+).

It is found in the cytoplasm. The catalysed reaction is a 2'-deoxyribonucleoside 5'-diphosphate + ATP = a 2'-deoxyribonucleoside 5'-triphosphate + ADP. The enzyme catalyses a ribonucleoside 5'-diphosphate + ATP = a ribonucleoside 5'-triphosphate + ADP. Functionally, major role in the synthesis of nucleoside triphosphates other than ATP. The ATP gamma phosphate is transferred to the NDP beta phosphate via a ping-pong mechanism, using a phosphorylated active-site intermediate. The protein is Nucleoside diphosphate kinase of Rhizobium etli (strain ATCC 51251 / DSM 11541 / JCM 21823 / NBRC 15573 / CFN 42).